The sequence spans 603 residues: MSATAAASSSIAVATNSLRNVTLSSRSPLPSAISVAFPSRGRNTLQRRLVLVSCSTGDGSKPTILVAEKLGDAGIKLLEDVANVDCSYNMTPEELNIKISLCDALIVRSGTKVGREVFESSHGRLKVVGRAGVGIDNVDLSAATEFGCLVVNAPTANTIAAAEHGIALMAAMARNVAQADASVKAGEWKRNKYVGVSLVGKTLAVLGFGKVGTEVARRAKGLGMRVIAHDPYAPADRAHAIGVDLVSFDEALATADFISLHMPLTPTTSKILNDETFAKMKKGVRIVNVARGGVIDEDALVRALDAGIVAQAALDVFTKEPPAKDSKLVQHERVTVTPHLGASTMEAQEGVAIEIAEAVVGALNGELAATAVNAPMVSAEVLTELKPYVVLAEKLGRLAVQLVAGGSGVKNAKITYASARATDDLDTRLLRAMITKGIIEPISDVYVNLVNADFTAKQRGLRLSEERVLLDGSPESPLETITVQLSNVESKFASSLSESGEVKVEGKVKDGVPHLTKVGSFEVDVTLEGSIILCRQVDQPGMIGTVGSILGESNVNVNFMSVGRIAPRKQAIMAIGVDDIPSKETLKKIGEIPAVEEFVFLKL.

A chloroplast-targeting transit peptide spans 1–54 (MSATAAASSSIAVATNSLRNVTLSSRSPLPSAISVAFPSRGRNTLQRRLVLVSC). Residues 210-211 (KV), Asp230, 289-291 (VAR), and Asp315 each bind NAD(+). Arg291 is an active-site residue. Glu320 is a catalytic residue. His339 serves as the catalytic Proton donor. 339–342 (HLGA) provides a ligand contact to NAD(+). In terms of domain architecture, ACT spans 531 to 603 (IILCRQVDQP…AVEEFVFLKL (73 aa)).

This sequence belongs to the D-isomer specific 2-hydroxyacid dehydrogenase family. As to expression, ubiquitous, but highly expressed in roots. Expressed in vasculature, root and shoot meristems, distal part of cotyledons and leaves, anther, stigma and pollen grains. Detected at the tip of the cotyledons in late embryos.

It is found in the plastid. The protein localises to the chloroplast. The enzyme catalyses (2R)-3-phosphoglycerate + NAD(+) = 3-phosphooxypyruvate + NADH + H(+). Its pathway is amino-acid biosynthesis; L-serine biosynthesis; L-serine from 3-phospho-D-glycerate: step 1/3. With respect to regulation, partially inhibited by 5 mM serine. Its function is as follows. Involved in the plastidial phosphorylated pathway of serine biosynthesis (PPSB). Required for mature pollen development. The sequence is that of D-3-phosphoglycerate dehydrogenase 1, chloroplastic (PGDH1) from Arabidopsis thaliana (Mouse-ear cress).